A 206-amino-acid polypeptide reads, in one-letter code: Probable glutathione S-transferase 7 (206 aa).

In terms of domain architecture, GST N-terminal spans 2–79; the sequence is VHYKVSYFPI…YLARQFGING (78 aa). Glutathione-binding positions include Y8, W39, K43, 49–51, and 63–64; these read GQL and QS. The region spanning 81–206 is the GST C-terminal domain; it reads CAWEEAQVNS…WLETRPVTPF (126 aa).

Belongs to the GST superfamily. Sigma family.

The catalysed reaction is RX + glutathione = an S-substituted glutathione + a halide anion + H(+). In terms of biological role, conjugation of reduced glutathione to a wide number of exogenous and endogenous hydrophobic electrophiles. May play a role in the detoxification of reactive oxygen species produced during pathogenic bacterial infection. In Caenorhabditis elegans, this protein is Probable glutathione S-transferase 7 (gst-7).